A 266-amino-acid polypeptide reads, in one-letter code: Hydroxyacylglutathione hydrolase (266 aa).

7 residues coordinate Zn(2+): His-53, His-55, Asp-57, His-58, His-118, Asp-140, and His-178.

The protein belongs to the metallo-beta-lactamase superfamily. Glyoxalase II family. Monomer. Requires Zn(2+) as cofactor.

The enzyme catalyses an S-(2-hydroxyacyl)glutathione + H2O = a 2-hydroxy carboxylate + glutathione + H(+). The protein operates within secondary metabolite metabolism; methylglyoxal degradation; (R)-lactate from methylglyoxal: step 2/2. Thiolesterase that catalyzes the hydrolysis of S-D-lactoyl-glutathione to form glutathione and D-lactic acid. The sequence is that of Hydroxyacylglutathione hydrolase from Cupriavidus metallidurans (strain ATCC 43123 / DSM 2839 / NBRC 102507 / CH34) (Ralstonia metallidurans).